A 421-amino-acid chain; its full sequence is Structure-specific endonuclease subunit SLX1 (421 aa).

The 83-residue stretch at A13–E95 folds into the GIY-YIG domain. Disordered stretches follow at residues T34–S57 and V96–G120. The SLX1-type zinc-finger motif lies at C225 to C280. The span at R310–S322 shows a compositional bias: basic residues. The tract at residues R310–T339 is disordered.

Belongs to the SLX1 family. As to quaternary structure, forms a heterodimer with SLX4. A divalent metal cation is required as a cofactor.

The protein localises to the nucleus. In terms of biological role, catalytic subunit of the SLX1-SLX4 structure-specific endonuclease that resolves DNA secondary structures generated during DNA repair and recombination. Has endonuclease activity towards branched DNA substrates, introducing single-strand cuts in duplex DNA close to junctions with ss-DNA. In Ajellomyces capsulatus (strain G186AR / H82 / ATCC MYA-2454 / RMSCC 2432) (Darling's disease fungus), this protein is Structure-specific endonuclease subunit SLX1.